The chain runs to 196 residues: Calcineurin B homologous protein 2 (196 aa).

The N-myristoyl glycine moiety is linked to residue Gly-2. EF-hand domains follow at residues 26–61, 71–106, 111–146, and 152–187; these read ASLLRLHHRFRALDRNKKGYLSRMDLQQIGALAVNP, FPDGSQRVDFPGFVRVLAHFRPVEDEDTETQDPKKP, SRRNKLHYAFQLYDLDRDGKISRHEMLQVLRLMVGV, and QLENIADRTVQEADEDGDGAVSFVEFTKSLEKMDVE. Phosphoserine is present on Ser-27. Residues Asp-124, Asp-126, Asp-128, Lys-130, and Glu-135 each coordinate Ca(2+). Residues 137 to 148 carry the Nuclear export signal motif; the sequence is LQVLRLMVGVQV. Residues Asp-165, Asp-167, Asp-169, and Glu-176 each contribute to the Ca(2+) site.

Belongs to the calcineurin regulatory subunit family. CHP subfamily. As to quaternary structure, interacts with PPP3CA. Interacts with SLC9A1/NHE1; the interaction occurs in a calcium-dependent manner. As to expression, expressed in malignantly transformed cells but not detected in normal tissues.

The protein resides in the nucleus. The protein localises to the cytoplasm. It is found in the cell membrane. Its function is as follows. Functions as an integral cofactor in cell pH regulation by controlling plasma membrane-type Na(+)/H(+) exchange activity. Binds to and activates SLC9A1/NHE1 in a serum-independent manner, thus increasing pH and protecting cells from serum deprivation-induced death. Also plays a role in the regulation of cell proliferation and tumor growth by increasing the phosphatase activity of PPP3CA in a calcium-dependent manner. Activator of the calcineurin/NFAT signaling pathway. Involved in the cytoplasmic translocation of the transcription factor NFATC3 to the nucleus. The protein is Calcineurin B homologous protein 2 (CHP2) of Homo sapiens (Human).